The chain runs to 309 residues: Eugenol synthase 2 (309 aa).

Residues 13–16 (TGYI), 35–45 (VRETTVSDPVK), R36, 86–88 (FMQ), 111–113 (SEF), K134, and 154–156 (NCF) contribute to the NADP(+) site. K134 acts as the Proton donor/acceptor in catalysis.

Belongs to the NmrA-type oxidoreductase family. As to expression, mostly expressed in petals, and, to a lower extent, in sepals, stamens and pistils.

The enzyme catalyses eugenol + a carboxylate + NADP(+) = a coniferyl ester + NADPH. It carries out the reaction eugenol + acetate + NADP(+) = (E)-coniferyl acetate + NADPH. It participates in aromatic compound metabolism; phenylpropanoid biosynthesis. Catalyzes the synthesis of the phenylpropene eugenol from coniferyl acetate. Phenylpropenes are produced by plants as defense compounds with antimicrobial and antianimal properties, or as floral attractants of pollinators. This Clarkia breweri (Fairy fans) protein is Eugenol synthase 2.